A 457-amino-acid chain; its full sequence is Siroheme synthase (457 aa).

Residues 1-204 form a precorrin-2 dehydrogenase /sirohydrochlorin ferrochelatase region; sequence MDHLPIFCQL…ADEKAVNATT (204 aa). NAD(+) is bound by residues 22–23 and 43–44; these read DV and LT. S128 bears the Phosphoserine mark. Residues 216–457 form a uroporphyrinogen-III C-methyltransferase region; the sequence is GEVVLVGAGP…RDKLNWFSSH (242 aa). P225 lines the S-adenosyl-L-methionine pocket. D248 (proton acceptor) is an active-site residue. K270 acts as the Proton donor in catalysis. S-adenosyl-L-methionine-binding positions include 301 to 303, I306, 331 to 332, M382, and G411; these read GGD and TA.

This sequence in the N-terminal section; belongs to the precorrin-2 dehydrogenase / sirohydrochlorin ferrochelatase family. The protein in the C-terminal section; belongs to the precorrin methyltransferase family.

The enzyme catalyses uroporphyrinogen III + 2 S-adenosyl-L-methionine = precorrin-2 + 2 S-adenosyl-L-homocysteine + H(+). It carries out the reaction precorrin-2 + NAD(+) = sirohydrochlorin + NADH + 2 H(+). The catalysed reaction is siroheme + 2 H(+) = sirohydrochlorin + Fe(2+). It participates in cofactor biosynthesis; adenosylcobalamin biosynthesis; precorrin-2 from uroporphyrinogen III: step 1/1. It functions in the pathway cofactor biosynthesis; adenosylcobalamin biosynthesis; sirohydrochlorin from precorrin-2: step 1/1. Its pathway is porphyrin-containing compound metabolism; siroheme biosynthesis; precorrin-2 from uroporphyrinogen III: step 1/1. The protein operates within porphyrin-containing compound metabolism; siroheme biosynthesis; siroheme from sirohydrochlorin: step 1/1. It participates in porphyrin-containing compound metabolism; siroheme biosynthesis; sirohydrochlorin from precorrin-2: step 1/1. In terms of biological role, multifunctional enzyme that catalyzes the SAM-dependent methylations of uroporphyrinogen III at position C-2 and C-7 to form precorrin-2 via precorrin-1. Then it catalyzes the NAD-dependent ring dehydrogenation of precorrin-2 to yield sirohydrochlorin. Finally, it catalyzes the ferrochelation of sirohydrochlorin to yield siroheme. The sequence is that of Siroheme synthase from Salmonella arizonae (strain ATCC BAA-731 / CDC346-86 / RSK2980).